Here is a 72-residue protein sequence, read N- to C-terminus: Translation initiation factor IF-1 (72 aa).

In terms of domain architecture, S1-like spans 1 to 72 (MAKEDSIEMQ…TKGRIVFRAR (72 aa)).

The protein belongs to the IF-1 family. In terms of assembly, component of the 30S ribosomal translation pre-initiation complex which assembles on the 30S ribosome in the order IF-2 and IF-3, IF-1 and N-formylmethionyl-tRNA(fMet); mRNA recruitment can occur at any time during PIC assembly.

The protein localises to the cytoplasm. Its function is as follows. One of the essential components for the initiation of protein synthesis. Stabilizes the binding of IF-2 and IF-3 on the 30S subunit to which N-formylmethionyl-tRNA(fMet) subsequently binds. Helps modulate mRNA selection, yielding the 30S pre-initiation complex (PIC). Upon addition of the 50S ribosomal subunit IF-1, IF-2 and IF-3 are released leaving the mature 70S translation initiation complex. The chain is Translation initiation factor IF-1 from Shewanella amazonensis (strain ATCC BAA-1098 / SB2B).